A 135-amino-acid chain; its full sequence is MSEKNKLPKGIIVLKTLSMPENINANGDIFGGWIMSQMDLGGAILAKEISGGKVATVRVDSINFLKSVSVGDIVNCYANCIKIGKSSIKINVEIWIKKIYSKPLGQYYCAAEAIFIYVAINKTGQPRELLPMSII.

Positions 8-123 (PKGIIVLKTL…IFIYVAINKT (116 aa)) constitute a HotDog ACOT-type domain.

This sequence belongs to the acyl coenzyme A hydrolase family.

This is an uncharacterized protein from Buchnera aphidicola subsp. Acyrthosiphon pisum (strain APS) (Acyrthosiphon pisum symbiotic bacterium).